The primary structure comprises 166 residues: Probable histone deacetylase complex subunit SAP18 (166 aa).

The segment at 143–166 (GRRFNNREQGDRFDHRQRQRSPIR) is disordered. The span at 147 to 158 (NNREQGDRFDHR) shows a compositional bias: basic and acidic residues.

It belongs to the SAP18 family. In terms of assembly, interacts with SIN3 and histone deacetylase.

Its function is as follows. Acts in transcription repression. Involved in the tethering of the SIN3 complex to core histone proteins. The chain is Probable histone deacetylase complex subunit SAP18 from Caenorhabditis elegans.